The following is a 165-amino-acid chain: Minor capsid protein VP2 (165 aa).

It belongs to the sapovirus VP2 family. Homooligomer. The portal-like structure consists in 12 copies of VP2. Interacts with capsid protein VP1.

Its subcellular location is the virion. The protein resides in the host cytoplasm. Functionally, minor structural protein that forms a portal-like structure at a unique three-fold axis of symmetry, following binding to the host receptor. The channel formed by VP2 may allow the delivery of the viral genome through the host endosomal membrane. This is Minor capsid protein VP2 from Homo sapiens (Human).